A 98-amino-acid polypeptide reads, in one-letter code: Cysteine-rich and transmembrane domain-containing protein WIH2 (98 aa).

The segment at 1-77 (MSQYNQPPVG…PPQHQQQQSS (77 aa)) is disordered. Over residues 9–21 (VGVPPPQGYPPEG) the composition is skewed to pro residues. The span at 37 to 55 (YPQQGYPPQGYPQQGYPQQ) shows a compositional bias: low complexity. A compositionally biased stretch (pro residues) spans 56 to 70 (GYPPPYAPQYPPPPQ). Residues 75–92 (QSSPGFLEGCLAALCCCC) form a helical membrane-spanning segment.

It belongs to the CYSTM1 family. As to expression, expressed in floral organ primordia.

It localises to the membrane. Its function is as follows. Required for the promotion of megasporogenesis, or promotion of germ cell formation from somatic precursor cells. Acts redundantly with WIH1. Functions in a genetic pathway downstream of SPL/NZZ and WUS and together with TRN2 in promoting megasporogenesis. The chain is Cysteine-rich and transmembrane domain-containing protein WIH2 from Arabidopsis thaliana (Mouse-ear cress).